A 369-amino-acid polypeptide reads, in one-letter code: Anhydro-N-acetylmuramic acid kinase (369 aa).

ATP is bound at residue 12–19 (GTSMDGVD).

It belongs to the anhydro-N-acetylmuramic acid kinase family.

The enzyme catalyses 1,6-anhydro-N-acetyl-beta-muramate + ATP + H2O = N-acetyl-D-muramate 6-phosphate + ADP + H(+). The protein operates within amino-sugar metabolism; 1,6-anhydro-N-acetylmuramate degradation. It participates in cell wall biogenesis; peptidoglycan recycling. Catalyzes the specific phosphorylation of 1,6-anhydro-N-acetylmuramic acid (anhMurNAc) with the simultaneous cleavage of the 1,6-anhydro ring, generating MurNAc-6-P. Is required for the utilization of anhMurNAc either imported from the medium or derived from its own cell wall murein, and thus plays a role in cell wall recycling. The protein is Anhydro-N-acetylmuramic acid kinase of Shewanella baltica (strain OS223).